The chain runs to 279 residues: Probable thymidylate synthase (279 aa).

Residues arginine 21 and 136 to 137 (RR) each bind dUMP. Residue cysteine 156 is the Nucleophile of the active site. DUMP is bound by residues 177–180 (RSVD), asparagine 188, and 218–220 (HIY). Residue aspartate 180 coordinates (6R)-5,10-methylene-5,6,7,8-tetrahydrofolate.

The protein belongs to the thymidylate synthase family.

The catalysed reaction is dUMP + (6R)-5,10-methylene-5,6,7,8-tetrahydrofolate = 7,8-dihydrofolate + dTMP. Sythesizes the thymine necessary for the viral DNA replication. This is Probable thymidylate synthase from Escherichia coli (Enterobacteria phage T5).